The following is a 668-amino-acid chain: Threonine--tRNA ligase (668 aa).

Residues 1–64 (MSQSVSLTFP…TDGKIEIITR (64 aa)) form the TGS domain. A catalytic region spans residues 245 to 553 (DHRKLGREMD…LIENFAGHMP (309 aa)). Zn(2+)-binding residues include Cys-347, His-398, and His-530.

Belongs to the class-II aminoacyl-tRNA synthetase family. In terms of assembly, homodimer. Zn(2+) serves as cofactor.

Its subcellular location is the cytoplasm. The enzyme catalyses tRNA(Thr) + L-threonine + ATP = L-threonyl-tRNA(Thr) + AMP + diphosphate + H(+). Functionally, catalyzes the attachment of threonine to tRNA(Thr) in a two-step reaction: L-threonine is first activated by ATP to form Thr-AMP and then transferred to the acceptor end of tRNA(Thr). Also edits incorrectly charged L-seryl-tRNA(Thr). This chain is Threonine--tRNA ligase, found in Rhizobium etli (strain ATCC 51251 / DSM 11541 / JCM 21823 / NBRC 15573 / CFN 42).